The primary structure comprises 364 residues: 4-hydroxythreonine-4-phosphate dehydrogenase (364 aa).

Substrate contacts are provided by H148 and T149. The a divalent metal cation site is built by H177, H216, and H301. Residues K309, N318, and R327 each coordinate substrate.

It belongs to the PdxA family. In terms of assembly, homodimer. Requires Zn(2+) as cofactor. The cofactor is Mg(2+). It depends on Co(2+) as a cofactor.

The protein resides in the cytoplasm. It carries out the reaction 4-(phosphooxy)-L-threonine + NAD(+) = 3-amino-2-oxopropyl phosphate + CO2 + NADH. The protein operates within cofactor biosynthesis; pyridoxine 5'-phosphate biosynthesis; pyridoxine 5'-phosphate from D-erythrose 4-phosphate: step 4/5. Its function is as follows. Catalyzes the NAD(P)-dependent oxidation of 4-(phosphooxy)-L-threonine (HTP) into 2-amino-3-oxo-4-(phosphooxy)butyric acid which spontaneously decarboxylates to form 3-amino-2-oxopropyl phosphate (AHAP). The sequence is that of 4-hydroxythreonine-4-phosphate dehydrogenase from Campylobacter jejuni subsp. jejuni serotype O:23/36 (strain 81-176).